We begin with the raw amino-acid sequence, 321 residues long: Lipoyl synthase (321 aa).

[4Fe-4S] cluster contacts are provided by Cys68, Cys73, Cys79, Cys94, Cys98, Cys101, and Ser308. The Radical SAM core domain occupies 80–297 (FNHGTATFMI…KAEALAMGFT (218 aa)).

The protein belongs to the radical SAM superfamily. Lipoyl synthase family. The cofactor is [4Fe-4S] cluster.

Its subcellular location is the cytoplasm. It carries out the reaction [[Fe-S] cluster scaffold protein carrying a second [4Fe-4S](2+) cluster] + N(6)-octanoyl-L-lysyl-[protein] + 2 oxidized [2Fe-2S]-[ferredoxin] + 2 S-adenosyl-L-methionine + 4 H(+) = [[Fe-S] cluster scaffold protein] + N(6)-[(R)-dihydrolipoyl]-L-lysyl-[protein] + 4 Fe(3+) + 2 hydrogen sulfide + 2 5'-deoxyadenosine + 2 L-methionine + 2 reduced [2Fe-2S]-[ferredoxin]. Its pathway is protein modification; protein lipoylation via endogenous pathway; protein N(6)-(lipoyl)lysine from octanoyl-[acyl-carrier-protein]: step 2/2. Its function is as follows. Catalyzes the radical-mediated insertion of two sulfur atoms into the C-6 and C-8 positions of the octanoyl moiety bound to the lipoyl domains of lipoate-dependent enzymes, thereby converting the octanoylated domains into lipoylated derivatives. The chain is Lipoyl synthase from Escherichia coli O9:H4 (strain HS).